Here is a 225-residue protein sequence, read N- to C-terminus: Octanoyltransferase (225 aa).

The BPL/LPL catalytic domain maps to proline 29–threonine 210. Residues arginine 69–histidine 76, alanine 141–glycine 143, and glycine 154–serine 156 contribute to the substrate site. Cysteine 172 functions as the Acyl-thioester intermediate in the catalytic mechanism.

Belongs to the LipB family.

It is found in the cytoplasm. The catalysed reaction is octanoyl-[ACP] + L-lysyl-[protein] = N(6)-octanoyl-L-lysyl-[protein] + holo-[ACP] + H(+). The protein operates within protein modification; protein lipoylation via endogenous pathway; protein N(6)-(lipoyl)lysine from octanoyl-[acyl-carrier-protein]: step 1/2. Catalyzes the transfer of endogenously produced octanoic acid from octanoyl-acyl-carrier-protein onto the lipoyl domains of lipoate-dependent enzymes. Lipoyl-ACP can also act as a substrate although octanoyl-ACP is likely to be the physiological substrate. This is Octanoyltransferase from Burkholderia pseudomallei (strain K96243).